The chain runs to 417 residues: Serine hydroxymethyltransferase (417 aa).

(6S)-5,6,7,8-tetrahydrofolate contacts are provided by residues Leu121 and 125 to 127; that span reads GHL. Lys230 carries the N6-(pyridoxal phosphate)lysine modification. Position 355 to 357 (355 to 357) interacts with (6S)-5,6,7,8-tetrahydrofolate; sequence SPF.

It belongs to the SHMT family. Homodimer. Requires pyridoxal 5'-phosphate as cofactor.

Its subcellular location is the cytoplasm. The enzyme catalyses (6R)-5,10-methylene-5,6,7,8-tetrahydrofolate + glycine + H2O = (6S)-5,6,7,8-tetrahydrofolate + L-serine. Its pathway is one-carbon metabolism; tetrahydrofolate interconversion. The protein operates within amino-acid biosynthesis; glycine biosynthesis; glycine from L-serine: step 1/1. Catalyzes the reversible interconversion of serine and glycine with tetrahydrofolate (THF) serving as the one-carbon carrier. This reaction serves as the major source of one-carbon groups required for the biosynthesis of purines, thymidylate, methionine, and other important biomolecules. Also exhibits THF-independent aldolase activity toward beta-hydroxyamino acids, producing glycine and aldehydes, via a retro-aldol mechanism. The chain is Serine hydroxymethyltransferase from Legionella pneumophila (strain Corby).